The primary structure comprises 180 residues: MANRLKEKFVNEITPDLVKKFDYTSVMQVPKIEKIVLNMGVGDAVTNSKNLDEAVAELELISGQKPLVTKAKKSIAGFRLREGMSIGAKVTLRGERMYDFLDKLVNVSLPRVRDFRGVSSKAFDGRGNYTLGVREQLIFPEIDFDNVNRVRGLDIVIVTTANTDEESRELLAQFGMPFEK.

It belongs to the universal ribosomal protein uL5 family. In terms of assembly, part of the 50S ribosomal subunit; part of the 5S rRNA/L5/L18/L25 subcomplex. Contacts the 5S rRNA and the P site tRNA. Forms a bridge to the 30S subunit in the 70S ribosome.

Its function is as follows. This is one of the proteins that bind and probably mediate the attachment of the 5S RNA into the large ribosomal subunit, where it forms part of the central protuberance. In the 70S ribosome it contacts protein S13 of the 30S subunit (bridge B1b), connecting the 2 subunits; this bridge is implicated in subunit movement. Contacts the P site tRNA; the 5S rRNA and some of its associated proteins might help stabilize positioning of ribosome-bound tRNAs. This is Large ribosomal subunit protein uL5 from Pediococcus pentosaceus (strain ATCC 25745 / CCUG 21536 / LMG 10740 / 183-1w).